Reading from the N-terminus, the 569-residue chain is Proline--tRNA ligase (569 aa).

The protein belongs to the class-II aminoacyl-tRNA synthetase family. ProS type 1 subfamily. As to quaternary structure, homodimer.

It is found in the cytoplasm. It carries out the reaction tRNA(Pro) + L-proline + ATP = L-prolyl-tRNA(Pro) + AMP + diphosphate. In terms of biological role, catalyzes the attachment of proline to tRNA(Pro) in a two-step reaction: proline is first activated by ATP to form Pro-AMP and then transferred to the acceptor end of tRNA(Pro). As ProRS can inadvertently accommodate and process non-cognate amino acids such as alanine and cysteine, to avoid such errors it has two additional distinct editing activities against alanine. One activity is designated as 'pretransfer' editing and involves the tRNA(Pro)-independent hydrolysis of activated Ala-AMP. The other activity is designated 'posttransfer' editing and involves deacylation of mischarged Ala-tRNA(Pro). The misacylated Cys-tRNA(Pro) is not edited by ProRS. This Legionella pneumophila (strain Lens) protein is Proline--tRNA ligase.